The primary structure comprises 409 residues: 1-deoxy-D-xylulose 5-phosphate reductoisomerase (409 aa).

NADPH is bound by residues Thr-10, Gly-11, Ser-12, Ile-13, Gly-36, Arg-37, Asn-38, and Asn-126. Lys-127 is a 1-deoxy-D-xylulose 5-phosphate binding site. Glu-128 serves as a coordination point for NADPH. Asp-152 is a binding site for Mn(2+). 1-deoxy-D-xylulose 5-phosphate is bound by residues Ser-153, Glu-154, Ser-190, and His-213. Mn(2+) is bound at residue Glu-154. Gly-219 contacts NADPH. Residues Ser-226, Asn-231, Lys-232, and Glu-235 each contribute to the 1-deoxy-D-xylulose 5-phosphate site. Glu-235 serves as a coordination point for Mn(2+).

The protein belongs to the DXR family. The cofactor is Mg(2+). Requires Mn(2+) as cofactor.

The catalysed reaction is 2-C-methyl-D-erythritol 4-phosphate + NADP(+) = 1-deoxy-D-xylulose 5-phosphate + NADPH + H(+). The protein operates within isoprenoid biosynthesis; isopentenyl diphosphate biosynthesis via DXP pathway; isopentenyl diphosphate from 1-deoxy-D-xylulose 5-phosphate: step 1/6. Its function is as follows. Catalyzes the NADPH-dependent rearrangement and reduction of 1-deoxy-D-xylulose-5-phosphate (DXP) to 2-C-methyl-D-erythritol 4-phosphate (MEP). This is 1-deoxy-D-xylulose 5-phosphate reductoisomerase from Prochlorococcus marinus (strain MIT 9515).